The chain runs to 1425 residues: Death-associated protein kinase dapk-1 (1425 aa).

The Protein kinase domain maps to 28–289 (YEIETELGSG…VEECLQHPWI (262 aa)). ATP-binding positions include 34–42 (LGSGQFAVV) and lysine 57. The active-site Proton acceptor is aspartate 155. ANK repeat units lie at residues 392 to 421 (NGAT…NICA), 425 to 454 (NGDT…DVDS), 458 to 487 (TGET…RLDL), 491 to 520 (SGDT…PLHL), 524 to 553 (REET…PIDA), 557 to 586 (DGKT…DINH), 590 to 619 (HGDT…TVDS), 623 to 652 (NKKT…DVTL), 810 to 841 (GGYE…DPTE), and 934 to 963 (IGMK…ILDT). The Roc domain occupies 695–950 (LDTSLRRIKL…MELAKCRTNI (256 aa)). Positions 1308 to 1389 (ELACLLDPPH…DARDALYRTV (82 aa)) constitute a Death domain.

It belongs to the protein kinase superfamily. CAMK Ser/Thr protein kinase family. DAP kinase subfamily. Interacts with ptrn-1. The cofactor is Mg(2+). As to expression, expressed in epidermis, muscles and neurons.

It localises to the cytoplasm. It is found in the cytosol. The protein localises to the cytoskeleton. It catalyses the reaction L-seryl-[protein] + ATP = O-phospho-L-seryl-[protein] + ADP + H(+). It carries out the reaction L-threonyl-[protein] + ATP = O-phospho-L-threonyl-[protein] + ADP + H(+). Its function is as follows. Negative regulator of epidermal barrier repair and innate immune responses to wounding. The role in epidermal tissue integrity and wound healing is established through the inhibition of epidermal microtubule stability, possibly via the negative regulation of the microtubule minus-end binding protein ptrn-1. In epidermis, prevents expression of specific unc-44 isoforms probably by promoting nuclear localization of pinn-1, which in turn may affect sydn-1-ssup-72-mediated regulation of alternative polyadenylation of unc-44 mRNA. Appears to act downstream of or in parallel to muscarinic signaling in the regulation of autophagy. The sequence is that of Death-associated protein kinase dapk-1 from Caenorhabditis elegans.